Reading from the N-terminus, the 258-residue chain is Snake venom serine protease catroxase-2 (258 aa).

A signal peptide spans 1–18 (MVLIRVLANLLILQLSYA). The propeptide occupies 19 to 24 (QKSSEL). Positions 25 to 249 (VVGGDECNIN…YNDWIQSIIA (225 aa)) constitute a Peptidase S1 domain. Disulfide bonds link C31–C163, C50–C66, C98–C256, C142–C210, C174–C189, and C200–C225. N44 carries N-linked (GlcNAc...) asparagine glycosylation. Residues H65 and D110 each act as charge relay system in the active site. The Charge relay system role is filled by S204.

It belongs to the peptidase S1 family. Snake venom subfamily. Monomer. Expressed by the venom gland.

It localises to the secreted. Its function is as follows. Snake venom serine protease that may act in the hemostasis system of the prey. The chain is Snake venom serine protease catroxase-2 from Crotalus atrox (Western diamondback rattlesnake).